A 518-amino-acid chain; its full sequence is Probable inorganic carbon transporter subunit DabB (518 aa).

13 helical membrane-spanning segments follow: residues 3–23 (MQWV…LGSL), 37–57 (ISLL…FEWV), 65–85 (WVGV…IAFV), 114–134 (CVVT…WIAI), 165–185 (AEAC…TWFI), 207–227 (MLLA…GWLI), 242–262 (AGII…IVLS), 264–284 (MAQW…ALVM), 302–322 (MGLM…LHLV), 358–378 (WWFA…LADL), 379–399 (SGPY…IAER), 403–423 (LTSS…VVYT), and 442–462 (WKGD…YFLL).

This sequence belongs to the inorganic carbon transporter (TC 9.A.2) DabB family. Forms a complex with DabA.

It localises to the cell inner membrane. Its activity is regulated as follows. Intracellular DIC accumulation is sensitive to CCCP (carbonyl cyanide-m-chlorophenylhydrazone) and DCCD (N,N-dicyclohexylcarbodiimide) and therefore likely driven by either proton gradient, ATP, or both. Its function is as follows. Part of an energy-coupled inorganic carbon pump involved in transport of dissolved inorganic carbon (DIC) with downstream gene dabA (Tcr_0854); has been suggested to be a proton-DIC symporter. This is Probable inorganic carbon transporter subunit DabB from Hydrogenovibrio crunogenus (strain DSM 25203 / XCL-2) (Thiomicrospira crunogena).